A 468-amino-acid chain; its full sequence is 3-isopropylmalate dehydratase large subunit (468 aa).

3 residues coordinate [4Fe-4S] cluster: cysteine 347, cysteine 407, and cysteine 410.

This sequence belongs to the aconitase/IPM isomerase family. LeuC type 1 subfamily. In terms of assembly, heterodimer of LeuC and LeuD. It depends on [4Fe-4S] cluster as a cofactor.

The enzyme catalyses (2R,3S)-3-isopropylmalate = (2S)-2-isopropylmalate. It functions in the pathway amino-acid biosynthesis; L-leucine biosynthesis; L-leucine from 3-methyl-2-oxobutanoate: step 2/4. Functionally, catalyzes the isomerization between 2-isopropylmalate and 3-isopropylmalate, via the formation of 2-isopropylmaleate. This chain is 3-isopropylmalate dehydratase large subunit, found in Campylobacter jejuni subsp. jejuni serotype O:6 (strain 81116 / NCTC 11828).